The following is a 202-amino-acid chain: Securin (202 aa).

Alanine 2 carries the post-translational modification N-acetylalanine. The disordered stretch occupies residues 35-94 (LDGRSQVSTPRFGKTFDAPPALPKATRKALGTVNRATEKSVKTKGPLKQKQPSFSAKKMT). Residues 61 to 64 (RKAL) carry the D-box motif. 2 short sequence motifs (TEK-box) span residues 71-73 (TEK) and 94-96 (TEK). Residues 163–173 (PPSPVRMPSPP) carry the SH3-binding motif. Residue serine 165 is modified to Phosphoserine; by CDK1.

Belongs to the securin family. Interacts with RPS10 and DNAJA1. Interacts with the caspase-like ESPL1, and prevents its protease activity probably by covering its active site. Interacts with TP53 and blocks its activity probably by blocking its binding to DNA. Interacts with the Ku 70 kDa subunit of ds-DNA kinase. Interacts with PTTG1IP. Phosphorylated at Ser-165 by CDK1 during mitosis. In terms of processing, phosphorylated in vitro by ds-DNA kinase. Post-translationally, ubiquitinated through 'Lys-11' linkage of ubiquitin moieties by the anaphase promoting complex (APC) at the onset of anaphase, conducting to its degradation. 'Lys-11'-linked ubiquitination is mediated by the E2 ligase UBE2C/UBCH10.

Its subcellular location is the cytoplasm. It is found in the nucleus. Its function is as follows. Regulatory protein, which plays a central role in chromosome stability, in the p53/TP53 pathway, and DNA repair. Probably acts by blocking the action of key proteins. During the mitosis, it blocks Separase/ESPL1 function, preventing the proteolysis of the cohesin complex and the subsequent segregation of the chromosomes. At the onset of anaphase, it is ubiquitinated, conducting to its destruction and to the liberation of ESPL1. Its function is however not limited to a blocking activity, since it is required to activate ESPL1. Negatively regulates the transcriptional activity and related apoptosis activity of TP53. The negative regulation of TP53 may explain the strong transforming capability of the protein when it is overexpressed. May also play a role in DNA repair via its interaction with Ku, possibly by connecting DNA damage-response pathways with sister chromatid separation. The protein is Securin (PTTG1) of Gorilla gorilla gorilla (Western lowland gorilla).